Reading from the N-terminus, the 567-residue chain is GBF-interacting protein 1 (567 aa).

3 disordered regions span residues 70-150 (ERKK…PSGI), 164-192 (DKVDTEEQPLSKATSSSKDVVEPDKSKES), and 545-567 (PIGPSHVTNQQPQAARTNLGNNY). Polar residues-rich tracts occupy residues 91–102 (FASSYTDASNGR) and 121–136 (TASSAPNNARNDTKPS). The span at 182–191 (DVVEPDKSKE) shows a compositional bias: basic and acidic residues. Residues 550 to 567 (HVTNQQPQAARTNLGNNY) show a composition bias toward polar residues.

Belongs to the GIP1 family. Monomer, homodimer, homooligomer. Under non-reducing conditions, predominantly present in high molecular weight forms, but predominates in low molecular weight monomers under reducing conditions. Interacts with BZIP16, BZIP68 and GBF1. Interacts with LBD18. Expressed in roots, leaves, stems and flowers.

It localises to the nucleus. Plant specific protein that enhances G-box-binding factor (GBF) DNA binding activity. May function as a nuclear chaperone or lever and regulate the multimeric state of GBFs. May contribute to bZIP-mediated gene regulation. Is able to refold denatured rhodanese in vitro. Reduces DNA-binding activity of BZIP16, BZIP68 and GBF1 under non-reducing conditions through direct physical interaction. Acts as a negative co-regulator in red and blue light-mediated hypocotyl elongation. Functions to promote hypocotyl elongation during the early stages of seedling development by regulating the repression effect by BZIP16 and the activation effect by BZIP68 and GBF1 on LHCB2.4 expression. Enhances transcriptional activity of LBD18 in the EXP14 promoter. May act as a transcriptional coactivator of LBD18. This chain is GBF-interacting protein 1, found in Arabidopsis thaliana (Mouse-ear cress).